The primary structure comprises 534 residues: NAD(P)H-quinone oxidoreductase subunit 2 (534 aa).

Transmembrane regions (helical) follow at residues 15–35 (ILPE…DLIL), 42–62 (WIGY…YFQW), 79–99 (LSIV…LMSI), 109–129 (LAEF…LSGA), 132–152 (LVMI…LTGY), 167–187 (LLIG…LYGL), 210–230 (LGLV…ISAA), 244–264 (PTPV…ALAI), 280–300 (FVFT…ALAQ), 306–326 (MLAY…IAGT), 334–354 (IFYL…IILF), 378–398 (LGLS…GFFG), 410–432 (GLYW…YIRV), and 466–486 (VGLV…NPLF).

It belongs to the complex I subunit 2 family. In terms of assembly, NDH-1 can be composed of about 15 different subunits; different subcomplexes with different compositions have been identified which probably have different functions.

The protein localises to the cellular thylakoid membrane. It carries out the reaction a plastoquinone + NADH + (n+1) H(+)(in) = a plastoquinol + NAD(+) + n H(+)(out). It catalyses the reaction a plastoquinone + NADPH + (n+1) H(+)(in) = a plastoquinol + NADP(+) + n H(+)(out). NDH-1 shuttles electrons from an unknown electron donor, via FMN and iron-sulfur (Fe-S) centers, to quinones in the respiratory and/or the photosynthetic chain. The immediate electron acceptor for the enzyme in this species is believed to be plastoquinone. Couples the redox reaction to proton translocation, and thus conserves the redox energy in a proton gradient. Cyanobacterial NDH-1 also plays a role in inorganic carbon-concentration. The polypeptide is NAD(P)H-quinone oxidoreductase subunit 2 (Nostoc punctiforme (strain ATCC 29133 / PCC 73102)).